A 138-amino-acid chain; its full sequence is Large ribosomal subunit protein uL16c (138 aa).

Positions 1-21 are disordered; sequence MLSPQKTKFRKQHRGRMKGVS. A compositionally biased stretch (basic residues) spans 7-21; it reads TKFRKQHRGRMKGVS.

The protein belongs to the universal ribosomal protein uL16 family. As to quaternary structure, part of the 50S ribosomal subunit.

It is found in the plastid. The protein resides in the chloroplast. The chain is Large ribosomal subunit protein uL16c from Cycas taitungensis (Prince sago).